Consider the following 352-residue polypeptide: C-X-C chemokine receptor type 4 (352 aa).

The important for chemokine binding and signaling stretch occupies residues methionine 1–tyrosine 21. The Extracellular segment spans residues methionine 1–lysine 38. Tyrosine 7 bears the Sulfotyrosine mark. Asparagine 11 carries an N-linked (GlcNAc...) asparagine glycan. The residue at position 12 (tyrosine 12) is a Sulfotyrosine. The O-linked (Xyl...) (chondroitin sulfate) serine glycan is linked to serine 18. Residue tyrosine 21 is modified to Sulfotyrosine. Disulfide bonds link cysteine 28–cysteine 274 and cysteine 109–cysteine 186. Residues isoleucine 39 to methionine 63 form a helical membrane-spanning segment. Residues glycine 64–arginine 77 are Cytoplasmic-facing. Residues leucine 78–valine 99 form a helical membrane-spanning segment. The chemokine binding stretch occupies residues tryptophan 94–aspartate 97. The Extracellular portion of the chain corresponds to alanine 100–lysine 110. The helical transmembrane segment at alanine 111 to isoleucine 130 threads the bilayer. The interval histidine 113–threonine 117 is chemokine binding. Residues serine 131 to lysine 154 lie on the Cytoplasmic side of the membrane. The Important for signaling signature appears at aspartate 133–tyrosine 135. Residues tyrosine 135–proline 147 form an involved in dimerization; when bound to chemokine region. The chain crosses the membrane as a helical span at residues valine 155–phenylalanine 174. Over alanine 175 to tryptophan 195 the chain is Extracellular. The segment at cysteine 186–tyrosine 190 is chemokine binding, important for signaling. The involved in dimerization stretch occupies residues proline 191–leucine 210. Residues valine 196 to leucine 216 form a helical membrane-spanning segment. Residues serine 217–threonine 241 are Cytoplasmic-facing. Residues valine 242–isoleucine 261 form a helical membrane-spanning segment. The Extracellular portion of the chain corresponds to aspartate 262–lysine 282. An involved in dimerization region spans residues leucine 266–glutamate 268. Residues tryptophan 283–tyrosine 302 traverse the membrane as a helical segment. Topologically, residues alanine 303–serine 352 are cytoplasmic. Residues serine 319 and serine 321 each carry the phosphoserine modification. Residues serine 324 and serine 325 each carry the phosphoserine; by PKC and GRK6 modification. Residues leucine 329–serine 352 are disordered. A Phosphoserine; by GRK6 modification is found at serine 330. Residue lysine 331 forms a Glycyl lysine isopeptide (Lys-Gly) (interchain with G-Cter in ubiquitin) linkage. Residues histidine 337–serine 352 are compositionally biased toward low complexity. Position 339 is a phosphoserine; by GRK6 (serine 339). Serine 348 and serine 351 each carry phosphoserine.

It belongs to the G-protein coupled receptor 1 family. In terms of assembly, monomer. Can form homodimers. Interacts with CD164. Interacts with ARRB2; the interaction is dependent on the C-terminal phosphorylation of CXCR4 and allows activation of MAPK1 and MAPK3. Interacts with ARR3; the interaction is dependent on the C-terminal phosphorylation of CXCR4 and modulates calcium mobilization. Interacts with RNF113A; the interaction, enhanced by CXCL12, promotes CXCR4 ubiquitination and subsequent degradation. Interacts (via the cytoplasmic C-terminal) with ITCH (via the WW domains I and II); the interaction, enhanced by CXCL12, promotes CXCR4 ubiquitination and leads to its degradation. Interacts with extracellular ubiquitin. Interacts with DBN1; this interaction is enhanced by antigenic stimulation. Following LPS binding, may form a complex with GDF5, HSP90AA1 and HSPA8. In terms of processing, phosphorylated on agonist stimulation. Rapidly phosphorylated on serine and threonine residues in the C-terminal. Phosphorylation at Ser-324 and Ser-325 leads to recruitment of ITCH, ubiquitination and protein degradation. Ubiquitinated after ligand binding, leading to its degradation. Ubiquitinated by ITCH at the cell membrane on agonist stimulation. The ubiquitin-dependent mechanism, endosomal sorting complex required for transport (ESCRT), then targets CXCR4 for lysosomal degradation. This process is dependent also on prior Ser-/Thr-phosphorylation in the C-terminal of CXCR4. Also binding of ARRB1 to STAM negatively regulates CXCR4 sorting to lysosomes though modulating ubiquitination of SFR5S. Post-translationally, sulfation is required for efficient binding of CXCL12/SDF-1alpha and promotes its dimerization. In terms of processing, O- and N-glycosylated. N-glycosylation can mask coreceptor function. The O-glycosylation chondroitin sulfate attachment does not affect interaction with CXCL12/SDF-1alpha nor its coreceptor activity.

The protein localises to the cell membrane. It localises to the cell junction. It is found in the early endosome. Its subcellular location is the late endosome. The protein resides in the lysosome. Receptor for the C-X-C chemokine CXCL12/SDF-1 that transduces a signal by increasing intracellular calcium ion levels and enhancing MAPK1/MAPK3 activation. Involved in the AKT signaling cascade. Plays a role in regulation of cell migration, e.g. during wound healing. Acts as a receptor for extracellular ubiquitin; leading to enhanced intracellular calcium ions and reduced cellular cAMP levels. Binds bacterial lipopolysaccharide (LPS) et mediates LPS-induced inflammatory response, including TNF secretion by monocytes. Involved in hematopoiesis and in cardiac ventricular septum formation. Also plays an essential role in vascularization of the gastrointestinal tract, probably by regulating vascular branching and/or remodeling processes in endothelial cells. Involved in cerebellar development. In the CNS, could mediate hippocampal-neuron survival. The polypeptide is C-X-C chemokine receptor type 4 (CXCR4) (Pan troglodytes (Chimpanzee)).